Consider the following 103-residue polypeptide: Large ribosomal subunit protein bL21 (103 aa).

It belongs to the bacterial ribosomal protein bL21 family. As to quaternary structure, part of the 50S ribosomal subunit. Contacts protein L20.

Functionally, this protein binds to 23S rRNA in the presence of protein L20. The polypeptide is Large ribosomal subunit protein bL21 (Pseudomonas fluorescens (strain Pf0-1)).